Here is a 560-residue protein sequence, read N- to C-terminus: 5'-nucleotidase (560 aa).

A signal peptide spans 1 to 21; sequence MNQRLIIKTALSAAILASLAG. Residue Cys22 is the site of N-palmitoyl cysteine attachment. The S-diacylglycerol cysteine moiety is linked to residue Cys22. A divalent metal cation contacts are provided by Asp45, His47, Asp88, Asn120, His221, His256, and Gln258. Residues Phe432 and 501–507 each bind substrate; that span reads YNASGGD.

Belongs to the 5'-nucleotidase family. Chloride serves as cofactor. Mg(2+) is required as a cofactor.

It localises to the cell outer membrane. It carries out the reaction a ribonucleoside 5'-phosphate + H2O = a ribonucleoside + phosphate. Its function is as follows. Degradation of extracellular 5'-nucleotides for nutritional needs. The polypeptide is 5'-nucleotidase (nutA) (Vibrio parahaemolyticus serotype O3:K6 (strain RIMD 2210633)).